We begin with the raw amino-acid sequence, 428 residues long: Aspartate--tRNA(Asp) ligase (428 aa).

Position 166 (Glu166) interacts with L-aspartate. The interval 188 to 191 (QLYK) is aspartate. Residue Arg210 coordinates L-aspartate. Residues 210–212 (RAE), 218–220 (RHL), and Glu351 each bind ATP. Residues Glu351 and Ser354 each contribute to the Mg(2+) site. 2 residues coordinate L-aspartate: Ser354 and Arg358. Residue 399–402 (GLER) participates in ATP binding.

It belongs to the class-II aminoacyl-tRNA synthetase family. Type 2 subfamily. In terms of assembly, homodimer. The cofactor is Mg(2+).

The protein resides in the cytoplasm. The catalysed reaction is tRNA(Asp) + L-aspartate + ATP = L-aspartyl-tRNA(Asp) + AMP + diphosphate. In terms of biological role, catalyzes the attachment of L-aspartate to tRNA(Asp) in a two-step reaction: L-aspartate is first activated by ATP to form Asp-AMP and then transferred to the acceptor end of tRNA(Asp). The protein is Aspartate--tRNA(Asp) ligase of Thermoplasma acidophilum (strain ATCC 25905 / DSM 1728 / JCM 9062 / NBRC 15155 / AMRC-C165).